A 492-amino-acid chain; its full sequence is 6-phosphogluconate dehydrogenase, decarboxylating (492 aa).

NADP(+) contacts are provided by residues Gly-13–Gly-18, Asn-36–Thr-38, Val-78–Ala-80, and Asn-106. Residue Asn-106 participates in substrate binding. Ser-107 carries the phosphoserine modification. Residue Ser-132 to Gly-134 participates in substrate binding. Residue Lys-187 is the Proton acceptor of the active site. His-190–Asn-191 provides a ligand contact to substrate. Glu-194 serves as the catalytic Proton donor. Position 195 (Tyr-195) interacts with substrate. Ser-215 is modified (phosphoserine). Substrate contacts are provided by Lys-264, Arg-291, Arg-449, and His-455.

It belongs to the 6-phosphogluconate dehydrogenase family. As to quaternary structure, homodimer.

It carries out the reaction 6-phospho-D-gluconate + NADP(+) = D-ribulose 5-phosphate + CO2 + NADPH. Its pathway is carbohydrate degradation; pentose phosphate pathway; D-ribulose 5-phosphate from D-glucose 6-phosphate (oxidative stage): step 3/3. In terms of biological role, catalyzes the oxidative decarboxylation of 6-phosphogluconate to ribulose 5-phosphate and CO(2), with concomitant reduction of NADP to NADPH. The polypeptide is 6-phosphogluconate dehydrogenase, decarboxylating (Schizosaccharomyces pombe (strain 972 / ATCC 24843) (Fission yeast)).